A 160-amino-acid polypeptide reads, in one-letter code: 6,7-dimethyl-8-ribityllumazine synthase (160 aa).

5-amino-6-(D-ribitylamino)uracil is bound by residues F32, A66 to E68, and C90 to I92. E95–T96 contributes to the (2S)-2-hydroxy-3-oxobutyl phosphate binding site. The active-site Proton donor is the H98. Residue N123 participates in 5-amino-6-(D-ribitylamino)uracil binding. R137 is a binding site for (2S)-2-hydroxy-3-oxobutyl phosphate.

This sequence belongs to the DMRL synthase family.

It carries out the reaction (2S)-2-hydroxy-3-oxobutyl phosphate + 5-amino-6-(D-ribitylamino)uracil = 6,7-dimethyl-8-(1-D-ribityl)lumazine + phosphate + 2 H2O + H(+). It participates in cofactor biosynthesis; riboflavin biosynthesis; riboflavin from 2-hydroxy-3-oxobutyl phosphate and 5-amino-6-(D-ribitylamino)uracil: step 1/2. In terms of biological role, catalyzes the formation of 6,7-dimethyl-8-ribityllumazine by condensation of 5-amino-6-(D-ribitylamino)uracil with 3,4-dihydroxy-2-butanone 4-phosphate. This is the penultimate step in the biosynthesis of riboflavin. This chain is 6,7-dimethyl-8-ribityllumazine synthase, found in Methylibium petroleiphilum (strain ATCC BAA-1232 / LMG 22953 / PM1).